Here is a 176-residue protein sequence, read N- to C-terminus: Peptide methionine sulfoxide reductase MsrA (176 aa).

Residue Cys-12 is part of the active site.

This sequence belongs to the MsrA Met sulfoxide reductase family.

The enzyme catalyses L-methionyl-[protein] + [thioredoxin]-disulfide + H2O = L-methionyl-(S)-S-oxide-[protein] + [thioredoxin]-dithiol. It carries out the reaction [thioredoxin]-disulfide + L-methionine + H2O = L-methionine (S)-S-oxide + [thioredoxin]-dithiol. In terms of biological role, has an important function as a repair enzyme for proteins that have been inactivated by oxidation. Catalyzes the reversible oxidation-reduction of methionine sulfoxide in proteins to methionine. The chain is Peptide methionine sulfoxide reductase MsrA from Thermus thermophilus (strain ATCC 27634 / DSM 579 / HB8).